The sequence spans 672 residues: Probable urocanate hydratase (672 aa).

NAD(+)-binding positions include 128–129 (GG), Gln-206, 253–255 (GMS), Glu-273, 318–319 (NV), 340–344 (QTSLH), 351–352 (YY), Tyr-400, and Gly-592.

It belongs to the urocanase family. NAD(+) serves as cofactor.

The enzyme catalyses 4-imidazolone-5-propanoate = trans-urocanate + H2O. It functions in the pathway amino-acid degradation; L-histidine degradation into L-glutamate; N-formimidoyl-L-glutamate from L-histidine: step 2/3. The chain is Probable urocanate hydratase (uroc1) from Dictyostelium discoideum (Social amoeba).